A 373-amino-acid chain; its full sequence is 2-aminoethylphosphonate--pyruvate transaminase (373 aa).

The residue at position 191 (K191) is an N6-(pyridoxal phosphate)lysine.

Belongs to the class-V pyridoxal-phosphate-dependent aminotransferase family. PhnW subfamily. Homodimer. It depends on pyridoxal 5'-phosphate as a cofactor.

It carries out the reaction (2-aminoethyl)phosphonate + pyruvate = phosphonoacetaldehyde + L-alanine. In terms of biological role, involved in phosphonate degradation. The chain is 2-aminoethylphosphonate--pyruvate transaminase from Burkholderia ambifaria (strain MC40-6).